Here is a 124-residue protein sequence, read N- to C-terminus: MHSKLNIQSKQLYKIFLLIVGSILGAILRWKLNNYFWVNISGAALLGLIVGLRAGSRIQFFLVIGFCGSFTTFSGWILDVFDLFRTGFFWKAAGLICSNLLGGFTALSVTFWIGRKIRHLFIPQ.

The next 4 membrane-spanning stretches (helical) occupy residues 7-27 (IQSKQLYKIFLLIVGSILGAI), 32-52 (LNNYFWVNISGAALLGLIVGL), 58-78 (IQFFLVIGFCGSFTTFSGWIL), and 93-113 (AGLICSNLLGGFTALSVTFWI). Residues G68 and T71 each contribute to the Na(+) site.

The protein belongs to the fluoride channel Fluc/FEX (TC 1.A.43) family.

The protein resides in the cell inner membrane. The catalysed reaction is fluoride(in) = fluoride(out). Na(+) is not transported, but it plays an essential structural role and its presence is essential for fluoride channel function. Fluoride-specific ion channel. Important for reducing fluoride concentration in the cell, thus reducing its toxicity. This chain is Fluoride-specific ion channel FluC 1, found in Prochlorococcus marinus (strain SARG / CCMP1375 / SS120).